Consider the following 189-residue polypeptide: Fucolectin-5 (189 aa).

The N-terminal stretch at 1-31 (MKTCNLTDRMKVKMIMLLFQILAISTLQSDS) is a signal peptide. The segment at 40-189 (QENVAVRGKA…VEVNALLPAN (150 aa)) is F5/8 type C-like. Residues D70, N72, and S81 each contribute to the Ca(2+) site. 3 disulfide bridges follow: C82–C178, C114–C115, and C140–C156. H84 and R111 together coordinate alpha-L-fucose. A Cell attachment site motif is present at residues 111-113 (RGD). R118 contributes to the alpha-L-fucose binding site. C178 and E179 together coordinate Ca(2+).

This sequence belongs to the fucolectin family. As to quaternary structure, homotrimer. Gill mucous cells.

The protein localises to the secreted. In terms of biological role, acts as a defensive agent. Recognizes blood group fucosylated oligosaccharides including A, B, H and Lewis B-type antigens. Does not recognize Lewis A antigen and has low affinity for monovalent haptens. The protein is Fucolectin-5 of Anguilla japonica (Japanese eel).